The primary structure comprises 385 residues: Probable endopeptidase MT2245 (385 aa).

Residues 235 to 257 (AALPPGAPPGDGPAPGVAPPPGG) show a composition bias toward pro residues. The segment at 235–268 (AALPPGAPPGDGPAPGVAPPPGGMPGLPFVQPDG) is disordered. Residues 270–385 (GGDRTAVVQA…SGPIYDARRY (116 aa)) form the NlpC/P60 domain. Cys300 serves as the catalytic Nucleophile. Catalysis depends on His348, which acts as the Proton acceptor. His360 is an active-site residue.

It belongs to the peptidase C40 family.

The sequence is that of Probable endopeptidase MT2245 from Mycobacterium tuberculosis (strain CDC 1551 / Oshkosh).